The following is a 248-amino-acid chain: Opiorphin prepropeptide (248 aa).

Positions 1–21 are cleaved as a signal peptide; sequence MKLTFFLGLLALISCFTPSES. The residue at position 22 (glutamine 22) is a Pyrrolidone carboxylic acid. Positions 150–198 are disordered; sequence DTTITTNPPTTATATTSTSTKPTMTISSSTVPISSTPEPATSISAATPA. Asparagine 218 carries an N-linked (GlcNAc...) asparagine glycan.

The protein belongs to the PROL1/PROL3 family. As to expression, abundantly expressed in lacrimal gland where it found in the secretory endpieces. Also expressed at modest levels in the submandibular gland.

It localises to the secreted. Its function is as follows. Opiorphin is an endogenous inhibitor of neprilysin and aminopeptidase N. Inhibits the breakdown of substance P, Mca-BK2 and Met-enkephalin by neprilysin in vitro with IC(50) values of 29 uM, 33 uM and 33 uM respectively. Inhibits the breakdown of Ala-pNA by aminopeptidase N in vitro with an IC(50) of 65 uM. Has a potent analgesic effect when administered to rats by intravenous injection. This Homo sapiens (Human) protein is Opiorphin prepropeptide.